A 300-amino-acid polypeptide reads, in one-letter code: Acyl-CoA-binding domain-containing protein 6 (300 aa).

Positions 1–19 (MASRSPSSSPDSATGSGTD) are enriched in low complexity. A disordered region spans residues 1–43 (MASRSPSSSPDSATGSGTDPARPDTGEPLGGGSDSDSDFGLGK). The ACB domain maps to 60 to 145 (LENEFESAAD…VHALDPEGSQ (86 aa)). An acyl-CoA-binding positions include 87–91 (YARFK), K113, and Y132. Positions 142–162 (EGSQKSSERRGGEKRTGFGGP) are disordered. A compositionally biased stretch (basic and acidic residues) spans 147-157 (SSERRGGEKRT). 2 ANK repeats span residues 209-238 (EGRA…DINS) and 242-271 (EGQT…DPSI). The interval 270–300 (SIKDQEGSLPEEVTESSAISSLLRQYTAPKG) is disordered. The segment covering 284–293 (ESSAISSLLR) has biased composition (polar residues).

In terms of tissue distribution, higly expressed in the central nervous system, developing eyes, otic vesicle, and trunk muscles.

It is found in the cytoplasm. Its subcellular location is the nucleus. Binds long-chain acyl-coenzyme A molecules with a strong preference for unsaturated C18:1-CoA. Does not bind fatty acids. Plays a role in protein N-myristoylation. The sequence is that of Acyl-CoA-binding domain-containing protein 6 (acbd6) from Danio rerio (Zebrafish).